The primary structure comprises 89 residues: MASFFKIAVICLVMLVVCSNARVIDVDDDYLMDFAASKRGGQTCYCRGGSGPTGGFWGGQNCPAGMTSCRKNILGNCCQKSKEGTDCDI.

Residues 1 to 21 form the signal peptide; that stretch reads MASFFKIAVICLVMLVVCSNA. Intrachain disulfides connect Cys-44/Cys-77, Cys-46/Cys-69, and Cys-62/Cys-78.

Expressed in ectodermal gland cells.

Probable toxin. The protein is N.vectensis toxin 7 of Nematostella vectensis (Starlet sea anemone).